Reading from the N-terminus, the 117-residue chain is Alpha-endosulfine (117 aa).

Residues 1–53 form a disordered region; sequence MAAPLGTGARAEDSGQEKQDSQEKETVIPERAEEAKLKAKYPNLGQKPGGSDF. Residues 10 to 37 show a composition bias toward basic and acidic residues; that stretch reads RAEDSGQEKQDSQEKETVIPERAEEAKL. Residue serine 67 is modified to Phosphoserine; by GWL. The interval 76-117 is disordered; it reads KMKNKQLPTAGPDKNLVTGDHIPKPQDLPQRKSSLVASKLAG.

Belongs to the endosulfine family. In terms of processing, phosphorylation at Ser-67 by GWL during mitosis is essential for interaction with PPP2R2D (PR55-delta) and subsequent inactivation of PP2A.

The protein resides in the cytoplasm. In terms of biological role, protein phosphatase inhibitor that specifically inhibits protein phosphatase 2A (PP2A) during mitosis. When phosphorylated at Ser-67 during mitosis, specifically interacts with PPP2R2D (PR55-delta) and inhibits its activity, leading to inactivation of PP2A, an essential condition to keep cyclin-B1-CDK1 activity high during M phase. The protein is Alpha-endosulfine (ENSA) of Gallus gallus (Chicken).